The chain runs to 162 residues: GTP-dependent dephospho-CoA kinase (162 aa).

6 residues coordinate GTP: aspartate 40, valine 41, valine 42, aspartate 59, lysine 61, and glutamate 111.

It belongs to the GTP-dependent DPCK family.

The catalysed reaction is 3'-dephospho-CoA + GTP = GDP + CoA + H(+). It participates in cofactor biosynthesis; coenzyme A biosynthesis. Functionally, catalyzes the GTP-dependent phosphorylation of the 3'-hydroxyl group of dephosphocoenzyme A to form coenzyme A (CoA). The chain is GTP-dependent dephospho-CoA kinase from Sulfurisphaera tokodaii (strain DSM 16993 / JCM 10545 / NBRC 100140 / 7) (Sulfolobus tokodaii).